A 385-amino-acid chain; its full sequence is Iron uptake system component EfeM (385 aa).

Residues 1–22 form the signal peptide; sequence MNFTKIAVSAGCILALCAGCGA.

Belongs to the EfeM/EfeO family. As to quaternary structure, component of the iron transporter efeUOB/M complex composed of EfeU, EfeM and EfeB; EfeU is essential for the complex formation.

The protein localises to the cell membrane. It localises to the membrane raft. Part of the iron transporter system efeUOB/M involved in iron import. Specifically binds Fe(3+), which is produced by EfeB-mediated oxidation of Fe(2+), and delivers it to the cell membrane permease EfeU. The polypeptide is Iron uptake system component EfeM (Bacillus subtilis (strain 168)).